A 194-amino-acid chain; its full sequence is Methyl-CpG-binding domain protein 3-like 1 (194 aa).

Positions 1–104 (MAKSSQRKQR…KLVPSYTGGS (104 aa)) are transcription repressor.

It belongs to the MBD3L family. As to expression, highly expressed in testis. Detected at low levels in pancreas. Not detected in the other tissues tested.

The protein resides in the nucleus. Transcriptional repressor. This chain is Methyl-CpG-binding domain protein 3-like 1 (MBD3L1), found in Homo sapiens (Human).